A 466-amino-acid chain; its full sequence is Sucrose-6-phosphate hydrolase (466 aa).

Substrate is bound by residues 38–41 (LLND), glutamine 57, 100–101 (YS), 159–160 (RD), and glutamate 218. Aspartate 41 is a catalytic residue.

The protein resides in the cytoplasm. It carries out the reaction Hydrolysis of terminal non-reducing beta-D-fructofuranoside residues in beta-D-fructofuranosides.. It functions in the pathway glycan biosynthesis; sucrose metabolism. Its function is as follows. Hydrolyzes sucrose and sucrose-6P, but fails to hydrolyze any of the phosphorylated isomers of sucrose and other phospho-D-glucosides, including maltose-6'P and trehalose-6P. The protein is Sucrose-6-phosphate hydrolase (scrB) of Klebsiella pneumoniae.